The following is a 214-amino-acid chain: Charged multivesicular body protein 2b (214 aa).

Residues 16–55 (EQNKELRGTQRAITRDRAALEKQEKQLEMEIKKMAKAGNK) adopt a coiled-coil conformation. The interval 178-203 (MAKAPSAAKGLPSTSASKSSGISDEE) is disordered. A compositionally biased stretch (polar residues) spans 189–199 (PSTSASKSSGI). The MIT-interacting motif motif lies at 202–212 (EEIERQLKALG).

It belongs to the SNF7 family. As to quaternary structure, probable core component of the endosomal sorting required for transport complex III (ESCRT-III). ESCRT-III components are thought to multimerize to form a flat lattice on the perimeter membrane of the endosome.

It is found in the cytoplasm. Its subcellular location is the cytosol. The protein resides in the late endosome membrane. Functionally, probable core component of the endosomal sorting required for transport complex III (ESCRT-III) which is involved in multivesicular bodies (MVBs) formation and sorting of endosomal cargo proteins into MVBs. MVBs contain intraluminal vesicles (ILVs) that are generated by invagination and scission from the limiting membrane of the endosome and mostly are delivered to lysosomes enabling degradation of membrane proteins, such as stimulated growth factor receptors, lysosomal enzymes and lipids. In Xenopus tropicalis (Western clawed frog), this protein is Charged multivesicular body protein 2b (chmp2b).